The sequence spans 601 residues: Phosphomethylpyrimidine synthase (601 aa).

Residues asparagine 224, methionine 253, tyrosine 282, histidine 318, 338–340 (SRG), 379–382 (DGLR), and glutamate 418 each bind substrate. Position 422 (histidine 422) interacts with Zn(2+). Tyrosine 445 lines the substrate pocket. Histidine 486 contacts Zn(2+). 3 residues coordinate [4Fe-4S] cluster: cysteine 566, cysteine 569, and cysteine 574.

It belongs to the ThiC family. In terms of assembly, homodimer. [4Fe-4S] cluster serves as cofactor.

The enzyme catalyses 5-amino-1-(5-phospho-beta-D-ribosyl)imidazole + S-adenosyl-L-methionine = 4-amino-2-methyl-5-(phosphooxymethyl)pyrimidine + CO + 5'-deoxyadenosine + formate + L-methionine + 3 H(+). It participates in cofactor biosynthesis; thiamine diphosphate biosynthesis. Functionally, catalyzes the synthesis of the hydroxymethylpyrimidine phosphate (HMP-P) moiety of thiamine from aminoimidazole ribotide (AIR) in a radical S-adenosyl-L-methionine (SAM)-dependent reaction. This Xylella fastidiosa (strain 9a5c) protein is Phosphomethylpyrimidine synthase.